Reading from the N-terminus, the 233-residue chain is MTDGLERLCRKLGYRFAEPALLRHAITHRSATKENNERLEFLGDSILNFLIADFLYSGFPRAQEGELSRLRATLVKGETLAELARELEIGDHLILGLGELKSGGYRRTSILADAFEAVIGAVYLDGGLEACRKLVSSLYRDRLETLTNEALLNLKDPKTRLQEYLQARQFPLPDYRVSAVSGEAHDQVFQVECTLNNTFPSVIGIGRSRRKAEQDAATRALALLLAENEDMNV.

The RNase III domain occupies 5-127 (LERLCRKLGY…VIGAVYLDGG (123 aa)). E40 contacts Mg(2+). D44 is an active-site residue. Mg(2+) contacts are provided by D113 and E116. Residue E116 is part of the active site. Residues 156-226 (DPKTRLQEYL…ATRALALLLA (71 aa)) enclose the DRBM domain.

Belongs to the ribonuclease III family. Homodimer. Requires Mg(2+) as cofactor.

The protein resides in the cytoplasm. The catalysed reaction is Endonucleolytic cleavage to 5'-phosphomonoester.. Its function is as follows. Digests double-stranded RNA. Involved in the processing of primary rRNA transcript to yield the immediate precursors to the large and small rRNAs (23S and 16S). Processes some mRNAs, and tRNAs when they are encoded in the rRNA operon. Processes pre-crRNA and tracrRNA of type II CRISPR loci if present in the organism. The protein is Ribonuclease 3 of Nitrosococcus oceani (strain ATCC 19707 / BCRC 17464 / JCM 30415 / NCIMB 11848 / C-107).